Here is a 320-residue protein sequence, read N- to C-terminus: tRNA pseudouridine synthase B (320 aa).

Asp-41 serves as the catalytic Nucleophile. Disordered stretches follow at residues 116 to 136 and 259 to 284; these read PPQV…ARRG and DQCQ…DPSA. A compositionally biased stretch (basic and acidic residues) spans 125–136; it reads QGERAHARARRG. The span at 270-284 shows a compositional bias: polar residues; it reads SDQQESAPNQTDPSA.

Belongs to the pseudouridine synthase TruB family. Type 1 subfamily.

The catalysed reaction is uridine(55) in tRNA = pseudouridine(55) in tRNA. Responsible for synthesis of pseudouridine from uracil-55 in the psi GC loop of transfer RNAs. This is tRNA pseudouridine synthase B from Prochlorococcus marinus (strain MIT 9313).